The primary structure comprises 5571 residues: Polyketide synthase GfsB (5571 aa).

Residues Met-1–Asn-27 are disordered. The segment covering Gly-18–Asn-27 has biased composition (basic and acidic residues). The 427-residue stretch at Gln-57–Gln-483 folds into the Ketosynthase family 3 (KS3) 1 domain. Module regions lie at residues Gln-57–Leu-2148, Asp-2167–Val-3728, and Asp-3746–Leu-5485. Catalysis depends on for beta-ketoacyl synthase 1 activity residues Cys-230, His-365, and His-405. Residues Pro-485–Val-518 form a disordered region. Positions Phe-611–His-926 constitute a Malonyl-CoA:ACP transacylase (MAT) 1 domain. An N-terminal hotdog fold 1 region spans residues His-976 to Pro-1109. The 289-residue stretch at His-976 to Pro-1264 folds into the PKS/mFAS DH 1 domain. His-1008 acts as the Proton acceptor; for dehydratase activity 1 in catalysis. Residues Ala-1122–Pro-1264 form a C-terminal hotdog fold 1 region. The Proton donor; for dehydratase activity 1 role is filled by Asp-1183. The Enoyl reductase (ER) domain occupies Gly-1478–Leu-1777. A Ketoreductase (KR) 1 domain is found at Gly-1787–Glu-1966. One can recognise a Carrier 1 domain in the interval Arg-2073–Leu-2148. Ser-2108 carries the post-translational modification O-(pantetheine 4'-phosphoryl)serine. The Ketosynthase family 3 (KS3) 2 domain maps to Asp-2167–Gln-2593. Active-site for beta-ketoacyl synthase 2 activity residues include Cys-2340, His-2475, and His-2515. The region spanning Val-2710–Arg-3016 is the Malonyl-CoA:ACP transacylase (MAT) 2 domain. A Ketoreductase (KR) 2 domain is found at Gly-3373–Glu-3551. Residues Thr-3653–Val-3728 form the Carrier 2 domain. Ser-3688 is subject to O-(pantetheine 4'-phosphoryl)serine. A Ketosynthase family 3 (KS3) 3 domain is found at Asp-3746–Gln-4172. Active-site for beta-ketoacyl synthase 3 activity residues include Cys-3919, His-4054, and His-4094. Positions Phe-4279–Pro-4601 constitute a Malonyl-CoA:ACP transacylase (MAT) 3 domain. The N-terminal hotdog fold 2 stretch occupies residues His-4649–Asp-4774. The PKS/mFAS DH 2 domain occupies His-4649–Ala-4931. His-4681 serves as the catalytic Proton acceptor; for dehydratase activity 2. The interval Ala-4787–Ala-4931 is C-terminal hotdog fold 2. Asp-4848 acts as the Proton donor; for dehydratase activity 2 in catalysis. Positions Leu-5134 to Glu-5306 constitute a Ketoreductase (KR) 3 domain. Residues Arg-5410 to Leu-5485 form the Carrier 3 domain. Ser-5445 carries the O-(pantetheine 4'-phosphoryl)serine modification.

It depends on pantetheine 4'-phosphate as a cofactor.

Its pathway is antibiotic biosynthesis. Second protein in the synthesis of the 16-membered macrolide antibiotics FD-891 and FD-892. Composed of 3 modules. Modifies the product of GfsA by multiple rounds of addition of malonyl-CoA or methylmalonyl-CoA and other modifications to help generate the final products. The chain is Polyketide synthase GfsB from Streptomyces halstedii.